Consider the following 154-residue polypeptide: Large ribosomal subunit protein uL23 (154 aa).

The protein belongs to the universal ribosomal protein uL23 family.

Its function is as follows. This protein binds to a specific region on the 26S rRNA. The polypeptide is Large ribosomal subunit protein uL23 (RPL23A) (Fritillaria agrestis (Stinkbells)).